Consider the following 66-residue polypeptide: Beta-toxin Cbo3 (66 aa).

Residues 1-66 form the LCN-type CS-alpha/beta domain; sequence KEGYIVNYHD…VWPLPKKTCN (66 aa). Cystine bridges form between Cys12–Cys65, Cys16–Cys41, Cys25–Cys46, and Cys29–Cys48. Asn66 carries the asparagine amide modification.

The protein belongs to the long (4 C-C) scorpion toxin superfamily. Sodium channel inhibitor family. Beta subfamily. In terms of tissue distribution, expressed by the venom gland.

The protein resides in the secreted. Its function is as follows. Beta toxins bind voltage-independently at site-4 of sodium channels and shift the voltage of activation toward more negative potentials thereby affecting sodium channel activation and promoting spontaneous and repetitive firing. A mixture of Cbo2 and Cbo3 is weakly active on the human voltage-gated sodium channels Nav1.4/SCN4A and Nav1.6/SCN8A when tested at 200 nM. In vivo, is toxic to mice when intraperitoneally injected. This chain is Beta-toxin Cbo3, found in Centruroides bonito (Scorpion).